The primary structure comprises 68 residues: Glucagon-1 (68 aa).

The protein belongs to the glucagon family.

It localises to the secreted. Functionally, promotes hydrolysis of glycogen and lipids, and raises the blood sugar level. This is Glucagon-1 (gcg) from Oncorhynchus kisutch (Coho salmon).